Here is a 264-residue protein sequence, read N- to C-terminus: Thymidylate synthase (264 aa).

Arginine 21 contacts dUMP. Residue histidine 51 participates in (6R)-5,10-methylene-5,6,7,8-tetrahydrofolate binding. 126–127 (RR) contributes to the dUMP binding site. Cysteine 146 functions as the Nucleophile in the catalytic mechanism. Residues 166–169 (RSAD), asparagine 177, and 207–209 (HLY) each bind dUMP. (6R)-5,10-methylene-5,6,7,8-tetrahydrofolate is bound at residue aspartate 169. A (6R)-5,10-methylene-5,6,7,8-tetrahydrofolate-binding site is contributed by serine 263.

The protein belongs to the thymidylate synthase family. Bacterial-type ThyA subfamily. Homodimer.

The protein resides in the cytoplasm. The enzyme catalyses dUMP + (6R)-5,10-methylene-5,6,7,8-tetrahydrofolate = 7,8-dihydrofolate + dTMP. The protein operates within pyrimidine metabolism; dTTP biosynthesis. Catalyzes the reductive methylation of 2'-deoxyuridine-5'-monophosphate (dUMP) to 2'-deoxythymidine-5'-monophosphate (dTMP) while utilizing 5,10-methylenetetrahydrofolate (mTHF) as the methyl donor and reductant in the reaction, yielding dihydrofolate (DHF) as a by-product. This enzymatic reaction provides an intracellular de novo source of dTMP, an essential precursor for DNA biosynthesis. In Neisseria gonorrhoeae (strain ATCC 700825 / FA 1090), this protein is Thymidylate synthase.